The sequence spans 155 residues: Protein phosphatase 1 regulatory subunit 17 (155 aa).

The tract at residues 41 to 73 is disordered; sequence KKKPRKGKNVQATLNVESDQKKPRRKDTPALHI. Basic and acidic residues predominate over residues 58–69; the sequence is SDQKKPRRKDTP. A phosphothreonine; by PKG/PRKG1 mark is found at Thr68 and Thr119.

Post-translationally, substrate for cGMP-dependent protein kinase. Phosphorylated by PRKG1 isoform alpha. Phosphorylation of Thr-68 and Thr-119 is required for its phosphatase activity. Substrate for cGMP-dependent protein kinase. In terms of tissue distribution, highly expressed in cerebellum.

Its function is as follows. Inhibits phosphatase activities of protein phosphatase 1 (PP1) and protein phosphatase 2A (PP2A) complexes. This is Protein phosphatase 1 regulatory subunit 17 (PPP1R17) from Homo sapiens (Human).